The following is a 1247-amino-acid chain: Lon protease homolog 2, peroxisomal (1247 aa).

A Lon N-terminal domain is found at 22-402; that stretch reads LPTYTLDSNL…LINEMILQLI (381 aa). 3 disordered regions span residues 76 to 103, 447 to 503, and 626 to 655; these read SGNSNEEERSETEQKIEQSSLGQPETYH, TKNR…DVDD, and DQSDKSQPIKDNSKDSPNSSSKALTKSPTS. Residues 459-477 show a composition bias toward low complexity; it reads PGPASSSGPSFSNGKSSPG. Over residues 626-639 the composition is skewed to basic and acidic residues; it reads DQSDKSQPIKDNSK. 721-728 is an ATP binding site; it reads GPPGTGKT. Residues 989-1230 enclose the Lon proteolytic domain; sequence TVGVGVVHGL…YDIIKIVWNE (242 aa). Residues Ser-1099 and Lys-1142 contribute to the active site.

Belongs to the peptidase S16 family.

It is found in the peroxisome matrix. It carries out the reaction Hydrolysis of proteins in presence of ATP.. Functionally, ATP-dependent serine protease that mediates the selective degradation of misfolded and unassembled polypeptides in the peroxisomal matrix. Necessary for type 2 peroxisome targeting signal (PTS2)-containing protein processing and facilitates peroxisome matrix protein import. The chain is Lon protease homolog 2, peroxisomal from Candida dubliniensis (strain CD36 / ATCC MYA-646 / CBS 7987 / NCPF 3949 / NRRL Y-17841) (Yeast).